Consider the following 708-residue polypeptide: Fatty acid oxidation complex subunit alpha (708 aa).

Residues 1–191 form an enoyl-CoA hydratase region; that stretch reads MDNNNAFQLS…KLGVVDACVP (191 aa). The segment at 311–708 is 3-hydroxyacyl-CoA dehydrogenase; sequence APVAAVGVLG…RAGLGEKFYP (398 aa).

This sequence in the N-terminal section; belongs to the enoyl-CoA hydratase/isomerase family. It in the central section; belongs to the 3-hydroxyacyl-CoA dehydrogenase family. In terms of assembly, heterotetramer of two alpha chains (FadJ) and two beta chains (FadI).

Its subcellular location is the cytoplasm. It carries out the reaction a (3S)-3-hydroxyacyl-CoA = a (2E)-enoyl-CoA + H2O. The enzyme catalyses a 4-saturated-(3S)-3-hydroxyacyl-CoA = a (3E)-enoyl-CoA + H2O. It catalyses the reaction a (3S)-3-hydroxyacyl-CoA + NAD(+) = a 3-oxoacyl-CoA + NADH + H(+). The catalysed reaction is (3S)-3-hydroxybutanoyl-CoA = (3R)-3-hydroxybutanoyl-CoA. The protein operates within lipid metabolism; fatty acid beta-oxidation. Catalyzes the formation of a hydroxyacyl-CoA by addition of water on enoyl-CoA. Also exhibits 3-hydroxyacyl-CoA epimerase and 3-hydroxyacyl-CoA dehydrogenase activities. In Vibrio cholerae serotype O1 (strain ATCC 39315 / El Tor Inaba N16961), this protein is Fatty acid oxidation complex subunit alpha.